Reading from the N-terminus, the 219-residue chain is Cysteine dioxygenase (219 aa).

Fe cation-binding residues include H106, H108, and H166. A cross-link (3'-(S-cysteinyl)-tyrosine (Cys-Tyr)) is located at residues 113 to 183 (CVMKILHGSL…NDFAISLHLY (71 aa)).

Belongs to the cysteine dioxygenase family. Fe cation is required as a cofactor. In terms of processing, the thioether cross-link between Cys-113 and Tyr-183 plays a structural role through stabilizing the Fe(2+) ion, and prevents the production of highly damaging free hydroxyl radicals by holding the oxygen radical via hydroxyl hydrogen.

The enzyme catalyses L-cysteine + O2 = 3-sulfino-L-alanine + H(+). Functionally, cysteine dioxygenase involved in sulfite formation from cysteine. Required for keratin degradation and plays an important role in filamentous growth and virulence. This is Cysteine dioxygenase from Arthroderma benhamiae (Trichophyton mentagrophytes).